The primary structure comprises 1040 residues: MADAFGDELFSVFEDDSTSAAGAKKDKEKEKWKGPPGSADKAGKRLDTKLQSESASGGKNKRDLDVEGTDEPIFGKKPRIEDSINEDLSLADLMPRVKVQSVETVEGCTHEVALPADEDYIPLKPRVGKAAKEYPFILDAFQREAIQCVDNNQSVLVSAHTSAGKTVCAEYAIALALREKQRVIFTSPIKALSNQKYREMYEEFQDVGLMTGDVTINPTASCLVMTTEILRSMLYRGSEVMREVAWVIFDEIHYMRDSERGVVWEETIILLPDNVHYVFLSATIPNARQFAEWICHLHKQPCHVIYTDYRPTPLQHYIFPAGGDGLHLVVDENGDFREDNFNTAMQVLRDAGDLAKGDQKGRKGGTKGPSNVFKIVKMIMERNFQPVIIFSFSKKDCEAYALQMTKLDFNTDEEKKMVEEVFNNAIDCLSDEDKKLPQVEHVLPLLKRGIGIHHGGLLPILKETIEILFSEGLIKALFATETFAMGINMPARTVLFTNARKYDGKDFRWISSGEYIQMSGRAGRRGMDDRGIVILMVDEKMSPTIGKQLLKGSADPLNSAFHLTYNMVLNLLRVEEINPEYMLEKSFYQFQHYRAIPGVVEKVKNSEEQYNKIVIPNEENVVIYYKIRQQLAKLGKEIEEYIHKPKYCLPFLQPGRLVKVKNEGDDFGWGVVVNFSKKSNVKPNSGELDPLYVVEVLLRCSKESLKNSATEAAKPAKPDEKGEMQVVPVLVHLLSAISTVRLYIPKDLRPVDNRQSVLKSIQEVQRRFPDGVPLLDPIDDMGIQDQGLKKVIQKVEAFEHRMYSHPLHNDPNLETVYTLCERKAQIALDIKSAKRELKKARTVLQMDELKCRKRVLRRLGFATSSDVIEMKGRVACEISSADELLLTEMMFNGLFNDLSSEQATALLSCFVFQENSSEMPKLTEQLAGPLRQMQECAKRIAKVSAEAKLEIDEETYLSSFKPHLMDVVYTWATGATFAHICKMTDVFEGSIIRCMRRLEELLRQMCQAAKAIGNTELENKFAEGITKIKRDIVFAASLYL.

At alanine 2 the chain carries N-acetylalanine. The tract at residues 16–77 (DSTSAAGAKK…GTDEPIFGKK (62 aa)) is disordered. A compositionally biased stretch (basic and acidic residues) spans 23–33 (AKKDKEKEKWK). Lysine 24 is covalently cross-linked (Glycyl lysine isopeptide (Lys-Gly) (interchain with G-Cter in SUMO2)). The residue at position 38 (serine 38) is a Phosphoserine. Residues 41–50 (KAGKRLDTKL) show a composition bias toward basic and acidic residues. 2 positions are modified to N6-acetyllysine: lysine 49 and lysine 76. Residues isoleucine 137, 159–166 (AHTSAGKT), serine 162, glycine 164, lysine 165, and threonine 166 each bind ATP. The 157-residue stretch at 146–302 (IQCVDNNQSV…WICHLHKQPC (157 aa)) folds into the Helicase ATP-binding domain. A DEIH box motif is present at residues 250–253 (DEIH). Lysine 356 is covalently cross-linked (Glycyl lysine isopeptide (Lys-Gly) (interchain with G-Cter in SUMO2)). The Helicase C-terminal domain maps to 403–575 (QMTKLDFNTD…NMVLNLLRVE (173 aa)). Glycyl lysine isopeptide (Lys-Gly) (interchain with G-Cter in SUMO2) cross-links involve residues lysine 682 and lysine 721.

This sequence belongs to the helicase family. SKI2 subfamily. As to quaternary structure, component of a TRAMP-like complex, an ATP-dependent exosome regulatory complex consisting of a helicase (MTREX), an oligadenylate polymerase (TENT4B or TENT4A), and a substrate specific RNA-binding factor (ZCCHC7 or ZCCHC8). Several TRAMP-like complexes exist with specific compositions and are associated with nuclear, or nucleolar RNA exosomes. Identified in the spliceosome C complex. Component of the poly(A) tail exosome targeting (PAXT) complex made of PABPN1, ZFC3H1 and MTREX that directs a subset of long and polyadenylated poly(A) RNAs for exosomal degradation. Component of the nuclear exosome targeting (NEXT) complex composed of MTREX, ZCCHC8, and RBM7 that directs a subset of non-coding short-lived RNAs for exosomal degradation. Interacts with ZCCHC8; this interaction bridges the interaction between RBM7 and MTREX. Binds to ZFC3H1 and RBM7 in a RNase-insensitive manner. Interacts with EXOSC10; the interaction mediates the association of MTREX with nuclear RNA exosomes. Interacts with isoform 1 of NVL in an ATP-dependent manner; the interaction is required to associate NVL with nuclear RNA exosome. Interacts with WDR74; the interaction dissociation in a late stage of rRNA synthesis is required for appropriate maturation of pre-60S particles and depends on the ATPase activity of NVL. Interacts with MPHOSPH6. Interacts with the RNA cap-binding complex proteins NCBP1 and SRRT. Interacts with NRDE2; the interaction is direct and negatively regulates MTREX function in exosomal degradation by changing its conformation precluding interaction with ZFC3H1, the RNA cap-binding complex proteins NCBP1 and SRRT, and association with the exosome. Associates with the RNA exosome complex.

It localises to the nucleus. The protein localises to the nucleoplasm. It is found in the nucleolus. The protein resides in the nucleus speckle. The catalysed reaction is ATP + H2O = ADP + phosphate + H(+). Its activity is regulated as follows. Activated when MTREX is incorporated into NEXT complex an the nuclear RNA exosome complex. Its function is as follows. Catalyzes the ATP-dependent unwinding of RNA duplexes with a single-stranded 3' RNA extension. Central subunit of many protein complexes, namely TRAMP-like, nuclear exosome targeting (NEXT) and poly(A) tail exosome targeting (PAXT). NEXT functions as an RNA exosome cofactor that directs a subset of non-coding short-lived RNAs for exosomal degradation. NEXT is involved in surveillance and turnover of aberrant transcripts and non-coding RNAs. PAXT directs a subset of long and polyadenylated poly(A) RNAs for exosomal degradation. The RNA exosome is fundamental for the degradation of RNA in eukaryotic nuclei. Substrate targeting is facilitated by its cofactor ZCCHC8, which links to RNA-binding protein adapters. Associated with the RNA exosome complex and involved in the 3'-processing of the 7S pre-RNA to the mature 5.8S rRNA. May be involved in pre-mRNA splicing. In the context of NEXT complex can also in vitro unwind DNA:RNA heteroduplexes with a 3' poly (A) RNA tracking strand. Can promote unwinding and degradation of structured RNA substrates when associated with the nuclear exosome and its cofactors. Can displace a DNA strand while translocating on RNA to ultimately degrade the RNA within a DNA/RNA heteroduplex. Plays a role in DNA damage response. This is Exosome RNA helicase MTR4 from Mus musculus (Mouse).